The primary structure comprises 156 residues: Small ribosomal subunit protein uS7 (156 aa).

The protein belongs to the universal ribosomal protein uS7 family. Part of the 30S ribosomal subunit. Contacts proteins S9 and S11.

Its function is as follows. One of the primary rRNA binding proteins, it binds directly to 16S rRNA where it nucleates assembly of the head domain of the 30S subunit. Is located at the subunit interface close to the decoding center, probably blocks exit of the E-site tRNA. This chain is Small ribosomal subunit protein uS7, found in Clostridium perfringens (strain ATCC 13124 / DSM 756 / JCM 1290 / NCIMB 6125 / NCTC 8237 / Type A).